Reading from the N-terminus, the 2211-residue chain is Orsellinic acid synthase (2211 aa).

Residues 44 to 246 are N-terminal acylcarrier protein transacylase domain (SAT); it reads TFREQVSDAI…TVAVVHSLYH (203 aa). The 426-residue stretch at 380–805 folds into the Ketosynthase family 3 (KS3) domain; the sequence is WDDIAIVGMA…GSNAAVIIGE (426 aa). Residues Cys-549, His-684, and His-724 each act as for beta-ketoacyl synthase activity in the active site. Positions 910-1228 are malonyl-CoA:ACP transacylase (MAT) domain; sequence VFIFSGQGSQ…QLTTLKKNVP (319 aa). The For acyl/malonyl transferase activity role is filled by Ser-1006. Residues 1309–1440 are N-terminal hotdog fold; that stretch reads HAIQKLSHGA…GVVKQSNMAS (132 aa). Residues 1309–1629 enclose the PKS/mFAS DH domain; that stretch reads HAIQKLSHGA…FQHVKIPLIE (321 aa). The interval 1334-1573 is product template (PT) domain; the sequence is EFIEGHLVCG…GATTLRAPVV (240 aa). His-1339 functions as the Proton acceptor; for dehydratase activity in the catalytic mechanism. A C-terminal hotdog fold region spans residues 1473–1629; the sequence is VQVFSKRAMY…FQHVKIPLIE (157 aa). Asp-1537 (proton donor; for dehydratase activity) is an active-site residue. 2 Carrier domains span residues 1681 to 1755 and 1787 to 1865; these read AAPE…EALS and STVD…VKRP. An O-(pantetheine 4'-phosphoryl)serine modification is found at Ser-1715. The segment at 1755–1786 is disordered; sequence SPTPVGNDVDNDSPTPGSERGSDSAISTPASV. Ser-1824 carries the post-translational modification O-(pantetheine 4'-phosphoryl)serine. The interval 1937–2204 is thioesterase (TE) domain; sequence SGKSPLFLIH…AAVSAALVDA (268 aa).

The enzyme catalyses 3 malonyl-CoA + acetyl-CoA + 2 H(+) = orsellinate + 3 CO2 + 4 CoA. Its pathway is secondary metabolite biosynthesis. Non-reducing polyketide synthase; part of the gene cluster that mediates the biosynthesis of the bibenzoquinone oosporein, a metabolite required for fungal virulence that acts by evading host immunity to facilitate fungal multiplication in insects. The non-reducing polyketide synthase OpS1 produces orsellinic acid by condensing acetyl-CoA with 3 malonyl-CoA units. Orsellinic acid is then hydroxylated to benzenetriol by the hydroxylase OpS4. The intermediate is oxidized either nonenzymatically to 5,5'-dideoxy-oosporein or enzymatically to benzenetetrol by the oxidoreductase OpS7. The latter is further dimerized to oosporein by the catalase OpS5. OpS6 probably functions en route for protecting cells against oxidative stress by scavenging any leaked free radical form of benzenetetrol by activating the thiol group of glutathione. This chain is Orsellinic acid synthase, found in Beauveria bassiana (strain ARSEF 2860) (White muscardine disease fungus).